The sequence spans 712 residues: Auxin response factor 15 (712 aa).

A DNA-binding region (TF-B3) is located at residues 142–244 (FCKTLTASDT…ELRLGVRRAA (103 aa)).

This sequence belongs to the ARF family. In terms of assembly, homo and heterodimers. In terms of tissue distribution, expressed in roots, culms, leaves and young panicles.

It localises to the nucleus. Its function is as follows. Auxin response factors (ARFs) are transcriptional factors that bind specifically to the DNA sequence 5'-TGTCTC-3' found in the auxin-responsive promoter elements (AuxREs). The polypeptide is Auxin response factor 15 (ARF15) (Oryza sativa subsp. japonica (Rice)).